The chain runs to 103 residues: N(4)-acetylcytidine amidohydrolase (103 aa).

The 89-residue stretch at 6-94 folds into the ASCH domain; that stretch reads ITFFQRFQND…IAEIYPNQTQ (89 aa). Catalysis depends on Lys21, which acts as the Proton acceptor. Catalysis depends on Thr24, which acts as the Nucleophile. Residue Glu74 is the Proton donor of the active site.

Belongs to the N(4)-acetylcytidine amidohydrolase family.

It catalyses the reaction N(4)-acetylcytidine + H2O = cytidine + acetate + H(+). The catalysed reaction is N(4)-acetyl-2'-deoxycytidine + H2O = 2'-deoxycytidine + acetate + H(+). It carries out the reaction N(4)-acetylcytosine + H2O = cytosine + acetate + H(+). In terms of biological role, catalyzes the hydrolysis of N(4)-acetylcytidine (ac4C). In Salmonella heidelberg (strain SL476), this protein is N(4)-acetylcytidine amidohydrolase (yqfB).